An 80-amino-acid chain; its full sequence is Nuclear protein 1 (80 aa).

Disordered stretches follow at residues 1–21 and 38–80; these read MATLPPTANPSQQPLNLEDED and VGGG…KAWR. Over residues 61-80 the composition is skewed to basic and acidic residues; that stretch reads GHERKLLTKFQNSERKKAWR. Positions 64 to 80 match the Nuclear localization signal motif; that stretch reads RKLLTKFQNSERKKAWR.

It belongs to the NUPR family. Monomer. Directly interacts with MSL1 and binds MORF4L1, two components of histone acetyltransferase complex; the interaction with MORF4L1 may be mediated by MSL1. Interacts with EP300; this interaction enhances the effect of EP300 on PAX2 transcription factor activity. Interacts with PAXIP1; this interaction prevents PAXIP1 inhibition of PAX2 transcription factor activity. Interacts with COPS5; this interaction allows COPS5-dependent CDKN1B nuclear to cytoplasm translocation. Interacts with RNF2. Interacts with FOXO3; this interaction represses FOXO3 transactivation. Interacts with PTMA; regulates apoptotic process. Interacts with MYOD1, EP300 and DDX5; this interaction coordinates the association of anti-proliferative and pro-myogenic proteins at the myogenin promoter. Interacts with TP53; interaction is stress-dependent. Forms a complex with EP300 and TP53; this complex binds CDKN1A promoter leading to transcriptional induction of CDKN1A. Post-translationally, phosphorylated. Phosphorylation promotes DNA-binding activity. In terms of processing, acetylated. As to expression, highly expressed in pancreas and both ovaries and testes.

The protein resides in the nucleus. Its subcellular location is the cytoplasm. It is found in the perinuclear region. In terms of biological role, transcription regulator that converts stress signals into a program of gene expression that empowers cells with resistance to the stress induced by a change in their microenvironment. Thereby participates in the regulation of many processes namely cell-cycle, apoptosis, autophagy and DNA repair responses. Controls cell cycle progression and protects cells from genotoxic stress induced by doxorubicin through the complex formation with TP53 and EP300 that binds CDKN1A promoter leading to transcriptional induction of CDKN1A. Protects pancreatic cancer cells from stress-induced cell death by binding the RELB promoter and activating its transcription, leading to IER3 transactivation. Negatively regulates apoptosis through interaction with PTMA. Inhibits autophagy-induced apoptosis in cardiac cells through FOXO3 interaction, inducing cytoplasmic translocation of FOXO3 thereby preventing the FOXO3 association with the pro-autophagic BNIP3 promoter. Inhibits cell growth and facilitates programmed cell death by apoptosis after adriamycin-induced DNA damage through transactivation of TP53. Regulates methamphetamine-induced apoptosis and autophagy through DDIT3-mediated endoplasmic reticulum stress pathway. Participates in DNA repair following gamma-irradiation by facilitating DNA access of the transcription machinery through interaction with MSL1 leading to inhibition of histone H4' Lys-16' acetylation (H4K16ac). Coactivator of PAX2 transcription factor activity, both by recruiting the EP300 cofactor to increase PAX2 transcription factor activity and by binding PAXIP1 to suppress PAXIP1-induced inhibition on PAX2. Positively regulates cell cycle progression through interaction with COPS5 inducing cytoplasmic translocation of CDKN1B leading to the CDKN1B degradation. Coordinates, through its interaction with EP300, the assiociation of MYOD1, EP300 and DDX5 to the MYOG promoter, leading to inhibition of cell-cycle progression and myogenic differentiation promotion. Negatively regulates beta cell proliferation via inhibition of cell-cycle regulatory genes expression through the suppression of their promoter activities. Also required for LHB expression and ovarian maturation. Exacerbates CNS inflammation and demyelination upon cuprizone treatment. This Mus musculus (Mouse) protein is Nuclear protein 1.